Consider the following 208-residue polypeptide: Pyrrolidone-carboxylate peptidase (208 aa).

Catalysis depends on residues E79, C142, and H166.

It belongs to the peptidase C15 family. As to quaternary structure, homotetramer made of two disulfide-linked dimers.

It localises to the cytoplasm. It catalyses the reaction Release of an N-terminal pyroglutamyl group from a polypeptide, the second amino acid generally not being Pro.. Functionally, removes 5-oxoproline from various penultimate amino acid residues except L-proline. This chain is Pyrrolidone-carboxylate peptidase (pcp), found in Pyrococcus furiosus (strain ATCC 43587 / DSM 3638 / JCM 8422 / Vc1).